The primary structure comprises 427 residues: Trigger factor (427 aa).

Residues 163–248 (GDTVVIDFVG…VHEVKAKEVP (86 aa)) form the PPIase FKBP-type domain.

It belongs to the FKBP-type PPIase family. Tig subfamily.

It is found in the cytoplasm. The enzyme catalyses [protein]-peptidylproline (omega=180) = [protein]-peptidylproline (omega=0). Involved in protein export. Acts as a chaperone by maintaining the newly synthesized protein in an open conformation. Functions as a peptidyl-prolyl cis-trans isomerase. This is Trigger factor from Streptococcus equi subsp. zooepidemicus (strain H70).